Reading from the N-terminus, the 2201-residue chain is Genome polyprotein (2201 aa).

Residue Gly-2 is the site of N-myristoyl glycine; by host attachment. Topologically, residues 2-1511 (GAQVSTQKTG…YVSRAFICLQ (1510 aa)) are cytoplasmic. The interval 566–582 (KLQGDVEEAIERARCTV) is amphipathic alpha-helix. Positions 858–860 (RGD) match the Cell attachment site motif. Catalysis depends on for protease 2A activity residues His-888 and Asp-906. Zn(2+) is bound by residues Cys-923 and Cys-925. Catalysis depends on Cys-977, which acts as the For protease 2A activity. Zn(2+)-binding residues include Cys-983 and His-985. The interval 1117–1189 (NDSWLKKFTE…EQSAPSQSDQ (73 aa)) is membrane-binding. The oligomerization stretch occupies residues 1117 to 1255 (NDSWLKKFTE…SPGAGKSVAT (139 aa)). Residues 1138-1142 (AIKIQ) form an RNA-binding region. One can recognise an SF3 helicase domain in the interval 1221–1377 (EKKMSNYIQF…SMYSQNGKIN (157 aa)). Residues Cys-1385, Cys-1397, and Cys-1402 each contribute to the Zn(2+) site. The C4-type; degenerate zinc-finger motif lies at 1385 to 1402 (CDEECCPVNFKKCCPLVC). Positions 1429-1436 (EYNHRHSV) are RNA-binding. Residues 1440 to 1445 (LEALFQ) are oligomerization. Residues 1512 to 1527 (AITTFVSVAGIIYIIY) lie within the membrane without spanning it. Topologically, residues 1528–2201 (KLFAGFQGAY…TLRRKWLDSF (674 aa)) are cytoplasmic. Tyr-1537 carries the post-translational modification O-(5'-phospho-RNA)-tyrosine. The Peptidase C3 domain maps to 1557-1735 (GPAFEFAVAM…FSAALLKHYF (179 aa)). Residues His-1596, Glu-1627, and Cys-1703 each act as for protease 3C activity in the active site. Positions 1966 to 2082 (GHLIAFDYSG…SYPWPIDASL (117 aa)) constitute a RdRp catalytic domain. Asp-1972 and Asp-2068 together coordinate Mg(2+).

It belongs to the picornaviruses polyprotein family. As to quaternary structure, interacts with capsid protein VP1 and capsid protein VP3 to form heterotrimeric protomers. Interacts with capsid protein VP0, and capsid protein VP3 to form heterotrimeric protomers. Five protomers subsequently associate to form pentamers which serve as building blocks for the capsid. Interacts with capsid protein VP2, capsid protein VP3 and capsid protein VP4 following cleavage of capsid protein VP0. Interacts with host integrin heterodimer ITGAV/ITGB6. In terms of assembly, interacts with capsid protein VP1 and capsid protein VP3 in the mature capsid. As to quaternary structure, interacts with capsid protein VP0 and capsid protein VP1 to form heterotrimeric protomers. Five protomers subsequently associate to form pentamers which serve as building blocks for the capsid. Interacts with capsid protein VP4 in the mature capsid. Interacts with protein 2C; this interaction may be important for virion morphogenesis. Interacts with capsid protein VP1 and capsid protein VP3. In terms of assembly, homodimer. As to quaternary structure, homohexamer; forms a hexameric ring structure with 6-fold symmetry characteristic of AAA+ ATPases. Interacts (via N-terminus) with host RTN3 (via reticulon domain); this interaction is important for viral replication. Interacts with capsid protein VP3; this interaction may be important for virion morphogenesis. Interacts with protein 3CD. In terms of assembly, homodimer. Interacts with host GBF1. Interacts (via GOLD domain) with host ACBD3 (via GOLD domain); this interaction allows the formation of a viral protein 3A/ACBD3 heterotetramer with a 2:2 stoichiometry, which will stimulate the recruitment of host PI4KB in order to synthesize PI4P at the viral RNA replication sites. As to quaternary structure, interacts with RNA-directed RNA polymerase. Interacts with protein 3AB and with RNA-directed RNA polymerase. In terms of assembly, interacts with Viral protein genome-linked and with protein 3CD. Requires Mg(2+) as cofactor. In terms of processing, specific enzymatic cleavages in vivo by the viral proteases yield processing intermediates and the mature proteins. Myristoylation is required for the formation of pentamers during virus assembly. Further assembly of 12 pentamers and a molecule of genomic RNA generates the provirion. Post-translationally, during virion maturation, immature virions are rendered infectious following cleavage of VP0 into VP4 and VP2. This maturation seems to be an autocatalytic event triggered by the presence of RNA in the capsid and it is followed by a conformational change infectious virion. In terms of processing, myristoylation is required during RNA encapsidation and formation of the mature virus particle. VPg is uridylylated by the polymerase into VPg-pUpU. This acts as a nucleotide-peptide primer for the genomic RNA replication.

Its subcellular location is the virion. The protein localises to the host cytoplasm. It localises to the host cytoplasmic vesicle membrane. The protein resides in the host nucleus. It carries out the reaction a ribonucleoside 5'-triphosphate + H2O = a ribonucleoside 5'-diphosphate + phosphate + H(+). It catalyses the reaction Selective cleavage of Tyr-|-Gly bond in the picornavirus polyprotein.. The enzyme catalyses RNA(n) + a ribonucleoside 5'-triphosphate = RNA(n+1) + diphosphate. The catalysed reaction is Selective cleavage of Gln-|-Gly bond in the poliovirus polyprotein. In other picornavirus reactions Glu may be substituted for Gln, and Ser or Thr for Gly.. Its activity is regulated as follows. Replication or transcription is subject to high level of random mutations by the nucleotide analog ribavirin. Its function is as follows. Forms an icosahedral capsid of pseudo T=3 symmetry with capsid proteins VP2 and VP3. The capsid is 300 Angstroms in diameter, composed of 60 copies of each capsid protein and enclosing the viral positive strand RNA genome. Capsid protein VP1 mainly forms the vertices of the capsid. Capsid protein VP1 interacts with host integrin ITGAV/ITGB6 to provide virion attachment to target host cells. This attachment induces virion internalization. Tyrosine kinases are probably involved in the entry process. After binding to its receptor, the capsid undergoes conformational changes. Capsid protein VP1 N-terminus (that contains an amphipathic alpha-helix) and capsid protein VP4 are externalized. Together, they shape a pore in the host membrane through which viral genome is translocated to host cell cytoplasm. Forms an icosahedral capsid of pseudo T=3 symmetry with capsid proteins VP2 and VP3. The capsid is 300 Angstroms in diameter, composed of 60 copies of each capsid protein and enclosing the viral positive strand RNA genome. In terms of biological role, lies on the inner surface of the capsid shell. After binding to the host receptor, the capsid undergoes conformational changes. Capsid protein VP4 is released, Capsid protein VP1 N-terminus is externalized, and together, they shape a pore in the host membrane through which the viral genome is translocated into the host cell cytoplasm. Functionally, component of immature procapsids, which is cleaved into capsid proteins VP4 and VP2 after maturation. Allows the capsid to remain inactive before the maturation step. Its function is as follows. Cysteine protease that cleaves viral polyprotein and specific host proteins. It is responsible for the autocatalytic cleavage between the P1 and P2 regions, which is the first cleavage occurring in the polyprotein. Also cleaves the host translation initiation factor EIF4G1, in order to shut down the capped cellular mRNA translation. Inhibits the host nucleus-cytoplasm protein and RNA trafficking by cleaving host members of the nuclear pores. Counteracts stress granule formation probably by antagonizing its assembly or promoting its dissassembly. Cleaves and inhibits host IFIH1/MDA5, thereby inhibiting the type-I IFN production and the establishment of the antiviral state. Cleaves and inhibits host MAVS, thereby inhibiting the type-I IFN production and the establishment of the antiviral state. Plays an essential role in the virus replication cycle by acting as a viroporin. Creates a pore in the host endoplasmic reticulum and as a consequence releases Ca2+ in the cytoplasm of infected cell. In turn, high levels of cytoplasmic calcium may trigger membrane trafficking and transport of viral ER-associated proteins to viroplasms, sites of viral genome replication. In terms of biological role, induces and associates with structural rearrangements of intracellular membranes. Displays RNA-binding, nucleotide binding and NTPase activities. May play a role in virion morphogenesis and viral RNA encapsidation by interacting with the capsid protein VP3. Functionally, localizes the viral replication complex to the surface of membranous vesicles. Together with protein 3CD binds the Cis-Active RNA Element (CRE) which is involved in RNA synthesis initiation. Acts as a cofactor to stimulate the activity of 3D polymerase, maybe through a nucleid acid chaperone activity. Its function is as follows. Localizes the viral replication complex to the surface of membranous vesicles. It inhibits host cell endoplasmic reticulum-to-Golgi apparatus transport and causes the disassembly of the Golgi complex, possibly through GBF1 interaction. This would result in depletion of MHC, trail receptors and IFN receptors at the host cell surface. Plays an essential role in viral RNA replication by recruiting ACBD3 and PI4KB at the viral replication sites, thereby allowing the formation of the rearranged membranous structures where viral replication takes place. Acts as a primer for viral RNA replication and remains covalently bound to viral genomic RNA. VPg is uridylylated prior to priming replication into VPg-pUpU. The oriI viral genomic sequence may act as a template for this. The VPg-pUpU is then used as primer on the genomic RNA poly(A) by the RNA-dependent RNA polymerase to replicate the viral genome. During genome replication, the VPg-RNA linkage is removed by the host TDP2, thereby accelerating replication. During the late stage of the replication cycle, host TDP2 is excluded from sites of viral RNA synthesis and encapsidation, allowing for the generation of progeny virions. In terms of biological role, involved in the viral replication complex and viral polypeptide maturation. It exhibits protease activity with a specificity and catalytic efficiency that is different from protease 3C. Protein 3CD lacks polymerase activity. Protein 3CD binds to the 5'UTR of the viral genome. Functionally, replicates the viral genomic RNA on the surface of intracellular membranes. May form linear arrays of subunits that propagate along a strong head-to-tail interaction called interface-I. Covalently attaches UMP to a tyrosine of VPg, which is used to prime RNA synthesis. The positive stranded RNA genome is first replicated at virus induced membranous vesicles, creating a dsRNA genomic replication form. This dsRNA is then used as template to synthesize positive stranded RNA genomes. ss(+)RNA genomes are either translated, replicated or encapsidated. Its function is as follows. Major viral protease that mediates proteolytic processing of the polyprotein. Cleaves host EIF5B, contributing to host translation shutoff. Also cleaves host PABPC1, contributing to host translation shutoff. Cleaves host NLRP1, triggers host N-glycine-mediated degradation of the autoinhibitory NLRP1 N-terminal fragment. This chain is Genome polyprotein, found in Coxsackievirus A9 (strain Griggs).